Reading from the N-terminus, the 156-residue chain is Large ribosomal subunit protein uL22 (156 aa).

The tract at residues 114–156 is disordered; sequence VESRPKQEKGGKAGASKASSRAARAQGSKAAAAKKTESKGGTS. Residues 127–146 are compositionally biased toward low complexity; it reads GASKASSRAARAQGSKAAAA. Residues 147 to 156 show a composition bias toward basic and acidic residues; the sequence is KKTESKGGTS.

Belongs to the universal ribosomal protein uL22 family. As to quaternary structure, part of the 50S ribosomal subunit.

Its function is as follows. This protein binds specifically to 23S rRNA; its binding is stimulated by other ribosomal proteins, e.g. L4, L17, and L20. It is important during the early stages of 50S assembly. It makes multiple contacts with different domains of the 23S rRNA in the assembled 50S subunit and ribosome. In terms of biological role, the globular domain of the protein is located near the polypeptide exit tunnel on the outside of the subunit, while an extended beta-hairpin is found that lines the wall of the exit tunnel in the center of the 70S ribosome. This is Large ribosomal subunit protein uL22 from Mycobacteroides abscessus (strain ATCC 19977 / DSM 44196 / CCUG 20993 / CIP 104536 / JCM 13569 / NCTC 13031 / TMC 1543 / L948) (Mycobacterium abscessus).